A 214-amino-acid chain; its full sequence is ER lumen protein-retaining receptor 3 (214 aa).

The Lumenal portion of the chain corresponds to 1–4; sequence MNVF. The chain crosses the membrane as a helical span at residues 5-24; sequence RISGDVSHLLAIIILLLKMW. Residues 25–32 are Cytoplasmic-facing; the sequence is KSKSCAGI. The chain crosses the membrane as a helical span at residues 33-52; it reads SGKSQLLFALVFTTRYLDLF. An interaction with the K-D-E-L motif on target proteins region spans residues 47 to 48; that stretch reads RY. The Lumenal portion of the chain corresponds to 53-58; it reads TVFISA. Residues 59 to 79 traverse the membrane as a helical segment; the sequence is YNTVMKIVFLVCAYVTVYLIY. At 80 to 92 the chain is on the cytoplasmic side; sequence GKFRKAYDSENDT. A helical membrane pass occupies residues 93 to 110; it reads FRLEFLLVPVIGLSFLEN. The Lumenal segment spans residues 111–116; the sequence is YEFTPL. Residues 117–135 traverse the membrane as a helical segment; the sequence is EILWTFSIYLESVAILPQL. At 136–149 the chain is on the cytoplasmic side; the sequence is FMISKTGEAESITT. A helical transmembrane segment spans residues 150–168; that stretch reads HYLFFLGLYRVLYLANWIW. An interaction with the K-D-E-L motif on target proteins region spans residues 159–169; sequence RVLYLANWIWR. Residues 169-178 lie on the Lumenal side of the membrane; it reads RYHTEKFYDQ. A helical membrane pass occupies residues 179-199; that stretch reads IAVVSGVVQTIFYFDFFYLYI. Residues 200-214 lie on the Cytoplasmic side of the membrane; sequence TKVLKGKKLSLPMPV. The tract at residues 204-207 is important for recycling of cargo proteins with the sequence motif K-D-E-L from the Golgi to the endoplasmic reticulum; the sequence is KGKK.

The protein belongs to the ERD2 family.

The protein resides in the endoplasmic reticulum membrane. Its subcellular location is the golgi apparatus membrane. It is found in the cytoplasmic vesicle. It localises to the COPI-coated vesicle membrane. Functionally, receptor for the C-terminal sequence motif K-D-E-L that is present on endoplasmic reticulum resident proteins and that mediates their recycling from the Golgi back to the endoplasmic reticulum. This Xenopus tropicalis (Western clawed frog) protein is ER lumen protein-retaining receptor 3 (kdelr3).